A 420-amino-acid polypeptide reads, in one-letter code: L-rhamnose isomerase (420 aa).

Residues His-264, Asp-296, and Asp-298 each contribute to the Mn(2+) site.

This sequence belongs to the rhamnose isomerase family. It depends on Mn(2+) as a cofactor.

The protein resides in the cytoplasm. It catalyses the reaction L-rhamnopyranose = L-rhamnulose. Its pathway is carbohydrate degradation; L-rhamnose degradation; glycerone phosphate from L-rhamnose: step 1/3. Functionally, catalyzes the interconversion of L-rhamnose and L-rhamnulose. This Listeria innocua serovar 6a (strain ATCC BAA-680 / CLIP 11262) protein is L-rhamnose isomerase.